A 183-amino-acid polypeptide reads, in one-letter code: Photosystem I assembly protein Ycf4 (183 aa).

A run of 2 helical transmembrane segments spans residues 21–43 (YWWA…SSRL) and 58–80 (FIPQ…TYLW).

Belongs to the Ycf4 family.

Its subcellular location is the plastid. It is found in the chloroplast thylakoid membrane. In terms of biological role, seems to be required for the assembly of the photosystem I complex. This chain is Photosystem I assembly protein Ycf4, found in Nephroselmis olivacea (Green alga).